The sequence spans 149 residues: 3-hydroxyacyl-[acyl-carrier-protein] dehydratase FabZ (149 aa).

Residue histidine 53 is part of the active site.

It belongs to the thioester dehydratase family. FabZ subfamily.

It is found in the cytoplasm. It catalyses the reaction a (3R)-hydroxyacyl-[ACP] = a (2E)-enoyl-[ACP] + H2O. Functionally, involved in unsaturated fatty acids biosynthesis. Catalyzes the dehydration of short chain beta-hydroxyacyl-ACPs and long chain saturated and unsaturated beta-hydroxyacyl-ACPs. The sequence is that of 3-hydroxyacyl-[acyl-carrier-protein] dehydratase FabZ from Neisseria meningitidis serogroup C / serotype 2a (strain ATCC 700532 / DSM 15464 / FAM18).